The following is a 729-amino-acid chain: Phosphoribosylformylglycinamidine synthase subunit PurL (729 aa).

The active site involves histidine 54. Tyrosine 57 and lysine 96 together coordinate ATP. Glutamate 98 contacts Mg(2+). Residues 99 to 102 and arginine 121 contribute to the substrate site; that span reads SHNH. Catalysis depends on histidine 100, which acts as the Proton acceptor. Mg(2+) is bound at residue aspartate 122. Glutamine 245 lines the substrate pocket. Residue aspartate 273 participates in Mg(2+) binding. 317 to 319 contacts substrate; sequence ETQ. ATP-binding residues include aspartate 495 and glycine 532. Asparagine 533 lines the Mg(2+) pocket. A substrate-binding site is contributed by serine 535.

Belongs to the FGAMS family. As to quaternary structure, monomer. Part of the FGAM synthase complex composed of 1 PurL, 1 PurQ and 2 PurS subunits.

Its subcellular location is the cytoplasm. It catalyses the reaction N(2)-formyl-N(1)-(5-phospho-beta-D-ribosyl)glycinamide + L-glutamine + ATP + H2O = 2-formamido-N(1)-(5-O-phospho-beta-D-ribosyl)acetamidine + L-glutamate + ADP + phosphate + H(+). Its pathway is purine metabolism; IMP biosynthesis via de novo pathway; 5-amino-1-(5-phospho-D-ribosyl)imidazole from N(2)-formyl-N(1)-(5-phospho-D-ribosyl)glycinamide: step 1/2. Functionally, part of the phosphoribosylformylglycinamidine synthase complex involved in the purines biosynthetic pathway. Catalyzes the ATP-dependent conversion of formylglycinamide ribonucleotide (FGAR) and glutamine to yield formylglycinamidine ribonucleotide (FGAM) and glutamate. The FGAM synthase complex is composed of three subunits. PurQ produces an ammonia molecule by converting glutamine to glutamate. PurL transfers the ammonia molecule to FGAR to form FGAM in an ATP-dependent manner. PurS interacts with PurQ and PurL and is thought to assist in the transfer of the ammonia molecule from PurQ to PurL. This Staphylococcus haemolyticus (strain JCSC1435) protein is Phosphoribosylformylglycinamidine synthase subunit PurL.